The following is a 219-amino-acid chain: MRRPGAVVRRAGGYVTNLMPTAAGDPIGGGLGDQVYNRLLGERIIFLGQAVDDDIANKITAQLLLLASDPDKDIYLYINSPGGSITAGMAIYDTMQYIKNDVVTIAMGMAASMGQFLLSAGTPGKRFALPNAEILIHQPSAGLAGSASDIKIHAERLLHTKKRMAELTAFHTGQTVEQVTRDSDRDRWFDPVEAKEYGLIDDIMPTAAGMPGGGGTGAA.

Serine 112 functions as the Nucleophile in the catalytic mechanism. Residue histidine 137 is part of the active site.

It belongs to the peptidase S14 family. In terms of assembly, fourteen ClpP subunits assemble into 2 heptameric rings which stack back to back to give a disk-like structure with a central cavity, resembling the structure of eukaryotic proteasomes.

It is found in the cytoplasm. It catalyses the reaction Hydrolysis of proteins to small peptides in the presence of ATP and magnesium. alpha-casein is the usual test substrate. In the absence of ATP, only oligopeptides shorter than five residues are hydrolyzed (such as succinyl-Leu-Tyr-|-NHMec, and Leu-Tyr-Leu-|-Tyr-Trp, in which cleavage of the -Tyr-|-Leu- and -Tyr-|-Trp bonds also occurs).. In terms of biological role, cleaves peptides in various proteins in a process that requires ATP hydrolysis. Has a chymotrypsin-like activity. Plays a major role in the degradation of misfolded proteins. This chain is ATP-dependent Clp protease proteolytic subunit 3, found in Streptomyces avermitilis (strain ATCC 31267 / DSM 46492 / JCM 5070 / NBRC 14893 / NCIMB 12804 / NRRL 8165 / MA-4680).